Consider the following 338-residue polypeptide: Biotin synthase (338 aa).

A Radical SAM core domain is found at 45–272 (DEVQMSTLLS…QSVVRLSAGR (228 aa)). Residues Cys-60, Cys-64, and Cys-67 each contribute to the [4Fe-4S] cluster site. The [2Fe-2S] cluster site is built by Cys-104, Cys-135, Cys-195, and Arg-267.

Belongs to the radical SAM superfamily. Biotin synthase family. As to quaternary structure, homodimer. Requires [4Fe-4S] cluster as cofactor. The cofactor is [2Fe-2S] cluster.

It catalyses the reaction (4R,5S)-dethiobiotin + (sulfur carrier)-SH + 2 reduced [2Fe-2S]-[ferredoxin] + 2 S-adenosyl-L-methionine = (sulfur carrier)-H + biotin + 2 5'-deoxyadenosine + 2 L-methionine + 2 oxidized [2Fe-2S]-[ferredoxin]. Its pathway is cofactor biosynthesis; biotin biosynthesis; biotin from 7,8-diaminononanoate: step 2/2. Catalyzes the conversion of dethiobiotin (DTB) to biotin by the insertion of a sulfur atom into dethiobiotin via a radical-based mechanism. This is Biotin synthase from Parvibaculum lavamentivorans (strain DS-1 / DSM 13023 / NCIMB 13966).